Reading from the N-terminus, the 469-residue chain is Putative arginine/ornithine antiporter (469 aa).

12 consecutive transmembrane segments (helical) span residues 8–28 (GFWLLTAFVVGNMVGSGIFSL), 44–64 (AWLLTGAGVLMIALVFGHLSI), 90–110 (AGFTMVWGYWVASWISNVAII), 144–164 (LTFAVCTILLWGTHAILVASI), 179–199 (VLGFVFFIVAGLFVFQTSLFG), 213–233 (IGIGGQVHNAAISTLWAFVGI), 254–274 (ITGLLIALSIYIIVTLITMGV), 301–321 (VIMALLAILCLFGTMLGWILL), 347–367 (SPVIALIITNVMSQVFIFSVI), 375–395 (FTFLTTAATLAYLIPYLVSAI), 417–437 (DGLIAILACAYSVFVIVTGTA), and 439–459 (LTTFILGIGLFFVGLIVYPFV).

The protein belongs to the amino acid-polyamine-organocation (APC) superfamily. Basic amino acid/polyamine antiporter (APA) (TC 2.A.3.2) family.

It localises to the cell membrane. The catalysed reaction is L-ornithine(in) + L-arginine(out) = L-ornithine(out) + L-arginine(in). Its function is as follows. Catalyzes electroneutral exchange between L-arginine and L-ornithine. This is Putative arginine/ornithine antiporter (yvsH) from Bacillus subtilis (strain 168).